A 178-amino-acid polypeptide reads, in one-letter code: Large ribosomal subunit protein uL6 (178 aa).

The span at 155–169 shows a compositional bias: basic and acidic residues; sequence PYKGKGIKYDNEQIR. The disordered stretch occupies residues 155–178; it reads PYKGKGIKYDNEQIRRKAGKSGGK.

It belongs to the universal ribosomal protein uL6 family. In terms of assembly, part of the 50S ribosomal subunit.

Functionally, this protein binds to the 23S rRNA, and is important in its secondary structure. It is located near the subunit interface in the base of the L7/L12 stalk, and near the tRNA binding site of the peptidyltransferase center. The protein is Large ribosomal subunit protein uL6 of Nitratidesulfovibrio vulgaris (strain DSM 19637 / Miyazaki F) (Desulfovibrio vulgaris).